A 795-amino-acid chain; its full sequence is RAS guanyl-releasing protein 1 (795 aa).

Basic and acidic residues predominate over residues 1 to 12 (MGTLGKAREAPR). The interval 1-37 (MGTLGKAREAPRKPCHGSRAGPKARLEAKSTNSPLPA) is disordered. An N-terminal Ras-GEF domain is found at 53-176 (LGHLAKGASL…HLIDTTQINS (124 aa)). Residues 57-110 (AKGASLDDLIDSCIQSFDADGNLCRNNQLLQVMLTMHRIIISSAELLQKVMNLY) form a ras exchanger motif region; required for transforming activity region. At Thr184 the chain carries Phosphothreonine; by PKC. Residues 205-436 (EPEELSEHLT…YELSYAREPR (232 aa)) form the Ras-GEF domain. EF-hand domains are found at residues 470 to 505 (HVQR…FPFS) and 506 to 532 (FCVM…ASSI). Residues Asp483, Asp485, Asp487, Tyr489, and Glu494 each contribute to the Ca(2+) site. A Phorbol-ester/DAG-type zinc finger spans residues 541 to 591 (PHNFQETTYLKPTFCDNCAGFLWGVIKQGYRCKDCGMNCHKQCKDLVVFEC). Ser597 carries the post-translational modification Phosphoserine. A suppress the PT region-mediated translocation to plasma membrane region spans residues 686–694 (TPGHFVLSS). Residues 717–795 (LVRKRAFVKW…LAQMDHGDSA (79 aa)) are PT region; mediates the BCR-dependent translocation to plasma membrane. Positions 738–779 (ELHLRLRTYQELEQEINTLKADNDALKIQLKYAQKKIESLQL) form a coiled coil.

It belongs to the RASGRP family. As to quaternary structure, homodimer. Forms a signaling complex with DGKZ and HRAS. Interacts with F-actin. Interacts with SKAP1. Detected in spleen and thymus. Expressed by mature thymocytes and to a lower extent by bone marrow-derived mast cells (at protein level). Detected in B-cells and keratinocytes (at protein level).

It localises to the cytoplasm. The protein localises to the cytosol. The protein resides in the cell membrane. It is found in the golgi apparatus membrane. Its subcellular location is the endoplasmic reticulum membrane. With respect to regulation, autoinhibited. Activated by diacylglycerol and calcium binding, which induces a conformational change releasing the autoinhibitory state. Regulated by DGKA. Regulated by DGKZ. Regulated by PLC gamma and F-actin polymerization. Functionally, functions as a calcium- and diacylglycerol (DAG)-regulated nucleotide exchange factor specifically activating Ras through the exchange of bound GDP for GTP. Activates the Erk/MAP kinase cascade. Regulates T-cell/B-cell development, homeostasis and differentiation by coupling T-lymphocyte/B-lymphocyte antigen receptors to Ras. Regulates NK cell cytotoxicity and ITAM-dependent cytokine production by activation of Ras-mediated ERK and JNK pathways. Functions in mast cell degranulation and cytokine secretion, regulating FcERI-evoked allergic responses. May also function in differentiation of other cell types. Proto-oncogene, which promotes T-cell lymphomagenesis when its expression is deregulated. The polypeptide is RAS guanyl-releasing protein 1 (Rasgrp1) (Mus musculus (Mouse)).